A 396-amino-acid polypeptide reads, in one-letter code: Ribosomal RNA large subunit methyltransferase I (396 aa).

The PUA domain occupies 2–81; sequence SVRLVLAKGR…ESIDIAFFSR (80 aa).

It belongs to the methyltransferase superfamily. RlmI family.

The protein localises to the cytoplasm. It carries out the reaction cytidine(1962) in 23S rRNA + S-adenosyl-L-methionine = 5-methylcytidine(1962) in 23S rRNA + S-adenosyl-L-homocysteine + H(+). Functionally, specifically methylates the cytosine at position 1962 (m5C1962) of 23S rRNA. In Escherichia coli (strain K12 / MC4100 / BW2952), this protein is Ribosomal RNA large subunit methyltransferase I.